The chain runs to 257 residues: Achaete-scute complex protein T3 (257 aa).

A bHLH domain is found at 83-145 (PSVARRNARE…RIAVEYIRGL (63 aa)). Positions 161 to 221 (YNSADESSND…SEISGGGYIK (61 aa)) are disordered. 2 stretches are compositionally biased toward low complexity: residues 165–184 (DESSNDGSSYNDYNDSLDSS) and 193–213 (QSAQSHSYHSASPTPSYSGSE).

As to quaternary structure, efficient DNA binding requires dimerization with another bHLH protein. In terms of tissue distribution, l(1)SC, SC and AC strongly label the presumptive stomatogastric nervous system, while ASE is more prominent in the presumptive procephalic lobe.

Functionally, AS-C proteins are involved in the determination of the neuronal precursors in the peripheral nervous system and the central nervous system. The chain is Achaete-scute complex protein T3 (l(1)sc) from Drosophila melanogaster (Fruit fly).